A 950-amino-acid polypeptide reads, in one-letter code: Glycine dehydrogenase (decarboxylating) (950 aa).

Residue Lys-698 is modified to N6-(pyridoxal phosphate)lysine.

This sequence belongs to the GcvP family. As to quaternary structure, the glycine cleavage system is composed of four proteins: P, T, L and H. It depends on pyridoxal 5'-phosphate as a cofactor.

The catalysed reaction is N(6)-[(R)-lipoyl]-L-lysyl-[glycine-cleavage complex H protein] + glycine + H(+) = N(6)-[(R)-S(8)-aminomethyldihydrolipoyl]-L-lysyl-[glycine-cleavage complex H protein] + CO2. Its function is as follows. The glycine cleavage system catalyzes the degradation of glycine. The P protein binds the alpha-amino group of glycine through its pyridoxal phosphate cofactor; CO(2) is released and the remaining methylamine moiety is then transferred to the lipoamide cofactor of the H protein. The sequence is that of Glycine dehydrogenase (decarboxylating) from Neisseria gonorrhoeae (strain ATCC 700825 / FA 1090).